The sequence spans 847 residues: MSRYDPAATESRWQAAWDAAGVFTARHDPARPKYYVLEMFPYPSGRIHMGHVRNYTMGDVVARQKAAAGFSVLHPMGWDAFGMPAENAAMERGGHPKDWTYGNIADMRAQMKPLGLSIDWSREFATCDPEYYGQQQAMFIDMMEAGLVYRKNAVVNWDPVDMTVLANEQVIDGKGWRSGAPVVRRELTQWFFRISDYAGELLEALDTLKDWPEKVRLMQANWIGQSRGLQFAFSMAGAPEGFDRLEVYTTRPDTLMGASFAAISPDHPLARHLERHDPEVAEFVAECRRVGTSEEALEKAEKKGFDTGLRVRHPFDAAWELPVYIANFILMDYGTGAIFGCPAHDQRDFEFATKYGLPIRPVFLPEGCEETALAEAFVPMKSERVHYIRGFAGAEVQTGEEGVAAAIAFCESQGVGRGVTNYRLRDWGISRQRYWGCPIPVIHCETCGVVPEAKENLPVRLPDDVSFDVPGNPLDRHPTWRDCTCPKCGAKARRETDTMDTFVDSSWYYARFTAPRAATPTDAEEADYWMNVDQYIGGIEHAILHLLYSRFFARAMQKTGHLPAKAIEPFNALFTQGMVTHEIYLTRDAAGRPVYHLPEDVTDGKLADGTPVEIIPSAKMSKSKKNVVDPMNIIRQFGADTARWFVMSDSPPERDVEWTASGAEAASKHLHRVWRLADEISRADGEANAEDGALDKATARAIAEVTQGVEGFAFNKAIAKLYEFTNTLSRSGAGAEAKKRAMRTMAQLMSPMVPHLAEEVWAMLGGEGLVAQAAWPKADPALLIDDTVTLPIQVNGKRRGEITVPKEMAASEVEKLVLADEAVQRALGGAAPKKLIVVPGRIVNVVI.

The 'HIGH' region signature appears at 41-51 (PYPSGRIHMGH). The 'KMSKS' region signature appears at 619-623 (KMSKS). Lys-622 serves as a coordination point for ATP.

This sequence belongs to the class-I aminoacyl-tRNA synthetase family.

Its subcellular location is the cytoplasm. It carries out the reaction tRNA(Leu) + L-leucine + ATP = L-leucyl-tRNA(Leu) + AMP + diphosphate. This chain is Leucine--tRNA ligase, found in Cereibacter sphaeroides (strain ATCC 17023 / DSM 158 / JCM 6121 / CCUG 31486 / LMG 2827 / NBRC 12203 / NCIMB 8253 / ATH 2.4.1.) (Rhodobacter sphaeroides).